Consider the following 240-residue polypeptide: MSEEEKPKPKLSPALAAKMAAMKKKQEGGEEAAASQEGGEKPKAKLSPMMAARMAAKKSGDASPAPDKPKAEPVDENRDPEPHEMAYRVIKEKFGDAVSDLDNNPLMPFFTVENVDAWQAIAFFMREDERLRFDYMACLSGVDYGDGRLGVVYNFDALATHKHKLTVKVFCSKEDPRIPSVAEIWLTADWHEREAYDMYGIVFEGHPDMRRILCPDDWDGYPLRKDYKVQEVYHGIKVPY.

A disordered region spans residues 1–82 (MSEEEKPKPK…PVDENRDPEP (82 aa)). Residues 11 to 20 (LSPALAAKMA) show a composition bias toward low complexity. The span at 67-82 (DKPKAEPVDENRDPEP) shows a compositional bias: basic and acidic residues.

The protein belongs to the complex I 30 kDa subunit family. In terms of assembly, NDH-1 is composed of 14 different subunits. Subunits NuoB, C, D, E, F, and G constitute the peripheral sector of the complex.

It localises to the cell inner membrane. The catalysed reaction is a quinone + NADH + 5 H(+)(in) = a quinol + NAD(+) + 4 H(+)(out). NDH-1 shuttles electrons from NADH, via FMN and iron-sulfur (Fe-S) centers, to quinones in the respiratory chain. The immediate electron acceptor for the enzyme in this species is believed to be a menaquinone. Couples the redox reaction to proton translocation (for every two electrons transferred, four hydrogen ions are translocated across the cytoplasmic membrane), and thus conserves the redox energy in a proton gradient. This chain is NADH-quinone oxidoreductase subunit C, found in Chloroherpeton thalassium (strain ATCC 35110 / GB-78).